Consider the following 960-residue polypeptide: CWF19-like protein 2 (960 aa).

Disordered regions lie at residues 1 to 222, 261 to 552, 624 to 648, and 712 to 731; these read MAAY…AGVV, EFQK…ELIL, AWPV…AIET, and AQKE…AVQE. Residues 13–101 adopt a coiled-coil conformation; the sequence is SIKSRKESKR…KKAKKEKKDE (89 aa). Over residues 16 to 52 the composition is skewed to basic and acidic residues; that stretch reads SRKESKREERERVIQKAKEKFEKEERRKAERKARGED. The span at 73-96 shows a compositional bias: basic residues; that stretch reads KTKKAKKEKKAKKSKKEKKKKAKK. The span at 108–117 shows a compositional bias: acidic residues; sequence SSEDSEDEWV. Residues 135-146 are compositionally biased toward low complexity; it reads EATPSSSSASNN. Positions 163 to 279 form a coiled coil; it reads SVADRRAQKE…EDAAYGERRD (117 aa). Composition is skewed to basic and acidic residues over residues 165 to 181, 261 to 372, and 404 to 417; these read ADRR…ERQK, EFQK…DDLS, and KPVD…EAGF. Positions 507–518 are enriched in polar residues; it reads SAVQDSETPTLQ. Positions 540–605 form a coiled coil; sequence SESEEEEEEE…IKDQSKRASK (66 aa). Acidic residues predominate over residues 541–552; it reads ESEEEEEEELIL. Over residues 713–731 the composition is skewed to basic and acidic residues; sequence QKERAGRDEERQRNKAVQE.

This sequence belongs to the CWF19 family.

The protein is CWF19-like protein 2 (cwf19l2) of Danio rerio (Zebrafish).